The following is a 720-amino-acid chain: Fatty acid CoA ligase Acsl3 (720 aa).

Residues 21–41 (ILLYFIHFIISLYTILTYIPF) traverse the membrane as a helical; Signal-anchor for type III membrane protein segment. At 42–720 (YFLCESKQEK…ADIERMYGRK (679 aa)) the chain is on the cytoplasmic side. The residue at position 683 (serine 683) is a Phosphoserine.

Belongs to the ATP-dependent AMP-binding enzyme family. Requires Mg(2+) as cofactor.

The protein localises to the mitochondrion outer membrane. It localises to the peroxisome membrane. It is found in the microsome membrane. The protein resides in the endoplasmic reticulum membrane. It carries out the reaction a long-chain fatty acid + ATP + CoA = a long-chain fatty acyl-CoA + AMP + diphosphate. It catalyses the reaction (E)-hexadec-2-enoate + ATP + CoA = (2E)-hexadecenoyl-CoA + AMP + diphosphate. The catalysed reaction is (5Z,8Z,11Z,14Z)-eicosatetraenoate + ATP + CoA = (5Z,8Z,11Z,14Z)-eicosatetraenoyl-CoA + AMP + diphosphate. The enzyme catalyses 15-hydroxy-(5Z,8Z,11Z,13E)-eicosatetraenoate + ATP + CoA = 15-hydroxy-(5Z,8Z,11Z,13E)-eicosatetraenoyl-CoA + AMP + diphosphate. It carries out the reaction 12-hydroxy-(5Z,8Z,10E,14Z)-eicosatetraenoate + ATP + CoA = 12-hydroxy-(5Z,8Z,10E,14Z)-eicosatetraenoyl-CoA + AMP + diphosphate. It catalyses the reaction 5-hydroxy-(6E,8Z,11Z,14Z)-eicosatetraenoate + ATP + CoA = 5-hydroxy-(6E,8Z,11Z,14Z)-eicosatetraenoyl-CoA + AMP + diphosphate. The catalysed reaction is 14,15-epoxy-(5Z,8Z,11Z)-eicosatrienoate + ATP + CoA = 14,15-epoxy-(5Z,8Z,11Z)-eicosatrienoyl-CoA + AMP + diphosphate. The enzyme catalyses 11,12-epoxy-(5Z,8Z,14Z)-eicosatrienoate + ATP + CoA = 11,12-epoxy-(5Z,8Z,14Z)-eicosatrienoyl-CoA + AMP + diphosphate. It carries out the reaction a medium-chain fatty acid + ATP + CoA = a medium-chain fatty acyl-CoA + AMP + diphosphate. It catalyses the reaction hexadecanoate + ATP + CoA = hexadecanoyl-CoA + AMP + diphosphate. The catalysed reaction is tetradecanoate + ATP + CoA = tetradecanoyl-CoA + AMP + diphosphate. The enzyme catalyses dodecanoate + ATP + CoA = dodecanoyl-CoA + AMP + diphosphate. It carries out the reaction octadecanoate + ATP + CoA = octadecanoyl-CoA + AMP + diphosphate. It catalyses the reaction eicosanoate + ATP + CoA = eicosanoyl-CoA + AMP + diphosphate. The catalysed reaction is (9Z)-octadecenoate + ATP + CoA = (9Z)-octadecenoyl-CoA + AMP + diphosphate. The enzyme catalyses (9Z)-hexadecenoate + ATP + CoA = (9Z)-hexadecenoyl-CoA + AMP + diphosphate. It carries out the reaction (9Z,12Z)-octadecadienoate + ATP + CoA = (9Z,12Z)-octadecadienoyl-CoA + AMP + diphosphate. It catalyses the reaction (9Z,12Z,15Z)-octadecatrienoate + ATP + CoA = (9Z,12Z,15Z)-octadecatrienoyl-CoA + AMP + diphosphate. The catalysed reaction is (4Z,7Z,10Z,13Z,16Z,19Z)-docosahexaenoate + ATP + CoA = (4Z,7Z,10Z,13Z,16Z,19Z)-docosahexaenoyl-CoA + AMP + diphosphate. The enzyme catalyses (5Z,8Z,11Z,14Z,17Z)-eicosapentaenoate + ATP + CoA = (5Z,8Z,11Z,14Z,17Z)-eicosapentaenoyl-CoA + AMP + diphosphate. It carries out the reaction a fatty acid + ATP + CoA = a fatty acyl-CoA + AMP + diphosphate. Its function is as follows. Acyl-CoA synthetases (ACSL) activates long-chain fatty acids for both synthesis of cellular lipids, and degradation via beta-oxidation. ACSL3 is required for the incorporation of fatty acids into phosphatidylcholine, the major phospholipid located on the surface of VLDL (very low density lipoproteins). Has mainly an anabolic role in energy metabolism. Mediates hepatic lipogenesis. Preferentially uses myristate, laurate, arachidonate and eicosapentaenoate as substrates. Both isoforms exhibit the same level of activity. The chain is Fatty acid CoA ligase Acsl3 from Mus musculus (Mouse).